Reading from the N-terminus, the 571-residue chain is Methionine--tRNA ligase (571 aa).

The 'HIGH' region motif lies at 10-20; that stretch reads PYVNAVPHLGN. 4 residues coordinate Zn(2+): Cys143, Cys146, Cys156, and Cys159. A 'KMSKS' region motif is present at residues 333–337; it reads KFSKS. ATP is bound at residue Lys336.

The protein belongs to the class-I aminoacyl-tRNA synthetase family. MetG type 1 subfamily. Zn(2+) serves as cofactor.

The protein resides in the cytoplasm. The enzyme catalyses tRNA(Met) + L-methionine + ATP = L-methionyl-tRNA(Met) + AMP + diphosphate. Its function is as follows. Is required not only for elongation of protein synthesis but also for the initiation of all mRNA translation through initiator tRNA(fMet) aminoacylation. The sequence is that of Methionine--tRNA ligase from Sulfolobus acidocaldarius (strain ATCC 33909 / DSM 639 / JCM 8929 / NBRC 15157 / NCIMB 11770).